We begin with the raw amino-acid sequence, 381 residues long: Probable peptidoglycan glycosyltransferase FtsW (381 aa).

9 helical membrane passes run 16 to 36 (LVLL…VYSA), 56 to 76 (LIFA…DYQL), 80 to 100 (WAVP…IPGI), 145 to 165 (LLSA…GLLL), 168 to 188 (PDMG…FAAG), 191 to 211 (LIFI…LVVH), 274 to 294 (VIGE…FFIL), 312 to 332 (FLAL…MAVV), and 343 to 363 (LPFL…VGIL).

The protein belongs to the SEDS family. FtsW subfamily.

It localises to the cell inner membrane. It carries out the reaction [GlcNAc-(1-&gt;4)-Mur2Ac(oyl-L-Ala-gamma-D-Glu-L-Lys-D-Ala-D-Ala)](n)-di-trans,octa-cis-undecaprenyl diphosphate + beta-D-GlcNAc-(1-&gt;4)-Mur2Ac(oyl-L-Ala-gamma-D-Glu-L-Lys-D-Ala-D-Ala)-di-trans,octa-cis-undecaprenyl diphosphate = [GlcNAc-(1-&gt;4)-Mur2Ac(oyl-L-Ala-gamma-D-Glu-L-Lys-D-Ala-D-Ala)](n+1)-di-trans,octa-cis-undecaprenyl diphosphate + di-trans,octa-cis-undecaprenyl diphosphate + H(+). It participates in cell wall biogenesis; peptidoglycan biosynthesis. Functionally, peptidoglycan polymerase that is essential for cell division. This chain is Probable peptidoglycan glycosyltransferase FtsW, found in Trichlorobacter lovleyi (strain ATCC BAA-1151 / DSM 17278 / SZ) (Geobacter lovleyi).